We begin with the raw amino-acid sequence, 123 residues long: Large ribosomal subunit protein eL8 (123 aa).

Belongs to the eukaryotic ribosomal protein eL8 family. In terms of assembly, part of the 50S ribosomal subunit. Probably part of the RNase P complex.

It is found in the cytoplasm. Its function is as follows. Multifunctional RNA-binding protein that recognizes the K-turn motif in ribosomal RNA, the RNA component of RNase P, box H/ACA, box C/D and box C'/D' sRNAs. In Thermococcus kodakarensis (strain ATCC BAA-918 / JCM 12380 / KOD1) (Pyrococcus kodakaraensis (strain KOD1)), this protein is Large ribosomal subunit protein eL8.